The sequence spans 285 residues: Nucleotide-binding protein Psyr_4150 (285 aa).

8–15 (GRSGSGKS) provides a ligand contact to ATP. 60 to 63 (DARN) contributes to the GTP binding site.

The protein belongs to the RapZ-like family.

Its function is as follows. Displays ATPase and GTPase activities. The polypeptide is Nucleotide-binding protein Psyr_4150 (Pseudomonas syringae pv. syringae (strain B728a)).